The chain runs to 482 residues: MATYYKTGSSEIYSRPEFVPGNAMNYTNSFTETFPRDSTNNVSPSKEIQVLSSLGGVSQMVEIQDSGSWRDQEDNDRNRFPVMRRLGLSSQIETSRGNNNNEYATQVVSGFTRTIHNSKYLKAAQELLDETVNVKKALKQFQPEGDKINEVKEKNLQTNTAEIPQAERQELQSKLSKLLSILDEVDRNYKQYYHQMQIVVSSFDVIAGCGAAKPYTALALQTISRHFRCLRDAISGQILVIRKSLGGEQDGSDGRGVGISRLRNVDQQVRQQRALQRLGVMQPHTWRPQRGLPDSSVLVLRAWLFEHFLHPYPKDSDKIMLARQTGLSRGQVSNWFINARVRLWKPMVEEMYKEEFTDALQENDPNQSSENTPEITEIQELQTESSSNNGHVPGVASSSMRQNTVAHGGDRFMMVTDMTRNGNGGMSLTLGIQNSDARGDVPMSGGIDNYKNTISGTDLQYLNSRNHQHQIGSSQLLHDFVA.

The interval 118 to 134 is SR/KY domain; that stretch reads SKYLKAAQELLDETVNV. A BELL domain region spans residues 167 to 238; that stretch reads ERQELQSKLS…CLRDAISGQI (72 aa). The homeobox DNA-binding region spans 285-347; that stretch reads TWRPQRGLPD…NARVRLWKPM (63 aa). The disordered stretch occupies residues 358–401; that stretch reads DALQENDPNQSSENTPEITEIQELQTESSSNNGHVPGVASSSMR. The span at 363–401 shows a compositional bias: polar residues; that stretch reads NDPNQSSENTPEITEIQELQTESSSNNGHVPGVASSSMR.

Belongs to the TALE/BELL homeobox family. In terms of assembly, may form heterodimeric complexes with TALE/KNOX proteins.

Its subcellular location is the nucleus. The sequence is that of BEL1-like homeodomain protein 7 (BLH7) from Arabidopsis thaliana (Mouse-ear cress).